The primary structure comprises 140 residues: Acyl-coenzyme A thioesterase 13 (140 aa).

At Met-1 the chain carries N-acetylmethionine. At Thr-2 the chain carries N-acetylthreonine; in Acyl-coenzyme A thioesterase 13, N-terminally processed. 3 positions are modified to N6-acetyllysine: Lys-27, Lys-37, and Lys-43. Residue Glu-46 participates in CoA binding. 2 residues coordinate substrate: Asn-50 and Gly-81. CoA contacts are provided by residues Ser-83, 90–95, and 108–113; these read YMSPAK and KQGKTL. N6-acetyllysine is present on residues Lys-108 and Lys-127. CoA is bound at residue His-137.

This sequence belongs to the thioesterase PaaI family. As to quaternary structure, homotetramer. Interacts with PCTP.

The protein resides in the cytoplasm. It localises to the cytosol. The protein localises to the mitochondrion. It is found in the nucleus. Its subcellular location is the cytoskeleton. The protein resides in the spindle. The enzyme catalyses a fatty acyl-CoA + H2O = a fatty acid + CoA + H(+). It catalyses the reaction decanoyl-CoA + H2O = decanoate + CoA + H(+). The catalysed reaction is octanoyl-CoA + H2O = octanoate + CoA + H(+). It carries out the reaction butanoyl-CoA + H2O = butanoate + CoA + H(+). The enzyme catalyses hexanoyl-CoA + H2O = hexanoate + CoA + H(+). It catalyses the reaction tetradecanoyl-CoA + H2O = tetradecanoate + CoA + H(+). The catalysed reaction is hexadecanoyl-CoA + H2O = hexadecanoate + CoA + H(+). It carries out the reaction dodecanoyl-CoA + H2O = dodecanoate + CoA + H(+). The enzyme catalyses (9Z)-octadecenoyl-CoA + H2O = (9Z)-octadecenoate + CoA + H(+). It catalyses the reaction (5Z,8Z,11Z,14Z)-eicosatetraenoyl-CoA + H2O = (5Z,8Z,11Z,14Z)-eicosatetraenoate + CoA + H(+). Catalyzes the hydrolysis of acyl-CoAs into free fatty acids and coenzyme A (CoASH), regulating their respective intracellular levels. Has acyl-CoA thioesterase activity towards medium (C12) and long-chain (C18) fatty acyl-CoA substrates. Can also hydrolyze 3-hydroxyphenylacetyl-CoA and 3,4-dihydroxyphenylacetyl-CoA (in vitro). May play a role in controlling adaptive thermogenesis. The protein is Acyl-coenzyme A thioesterase 13 of Homo sapiens (Human).